Here is a 695-residue protein sequence, read N- to C-terminus: MNVSQQIEPRAAASERNMADAIRFLSMDAVEKANSGHPGMPMGMADAVTVLFNRFIRIDPSLPDWPDRDRFVLSAGHGSMLLYSLHHLIGFADMPMAELSSFRQLGSKTAGHPEYGHALGIETTTGPLGQGISTAVGMAMAEQMMASRFGSALCNHFTYVVAGDGCLQEGISHEAIDLAGHLKLRKLVVLWDDNRISIDGSTDLSTSMNQLARFRAASWDAQAVDGHDPEAVAKALERARRTRKPSLIACRTRIGKGAASMEGSHKTHGAALGDKEIAATREKLGWPHPPFFVPPEIRAAWAKVAARGRTAREAWDIRLDASRSKKRYEQTIRRQFDGELGDLLAKFRSAHRTRATKVATRQASQMALEVINGATALTIGGSADLTGSNLTMTSQTQPISPGNFKGRYLHYGIREHGMAAAMNGIALHGGFIPYGGTFLVFSDYARGAMRLSALMGLPVIYVLTHDSIGLGEDGPTHQPVEHLAMLRATPNLNVFRPADIIETAECWEIALGEKNTPSVLALSRQALPMLRRTEGNENQSALGAYVLREARGNRDITILATGSEVEIAVAAAERLQAEEGIAAAVVSMPCWEKFEVQDLAYRRKVLGDAPRIAIEAAGRLGWDRWMGPDGAFVGMTGFGASAPAGDLYRHFGITADHVVAEALELLRRAYSETLPIGARIGPHPSAHTVRSSQEA.

A substrate-binding site is contributed by His-37. Thiamine diphosphate-binding positions include His-77 and 126–128; that span reads GPL. Residue Asp-164 coordinates Mg(2+). Thiamine diphosphate-binding residues include Gly-165 and Asn-194. Positions 194 and 196 each coordinate Mg(2+). Residues His-268, Arg-361, and Ser-388 each contribute to the substrate site. Thiamine diphosphate is bound at residue His-268. Catalysis depends on Glu-415, which acts as the Proton donor. Thiamine diphosphate is bound at residue Phe-441. Positions 465, 473, and 524 each coordinate substrate.

This sequence belongs to the transketolase family. As to quaternary structure, homodimer. Mg(2+) serves as cofactor. It depends on Ca(2+) as a cofactor. Mn(2+) is required as a cofactor. The cofactor is Co(2+). Requires thiamine diphosphate as cofactor.

The catalysed reaction is D-sedoheptulose 7-phosphate + D-glyceraldehyde 3-phosphate = aldehydo-D-ribose 5-phosphate + D-xylulose 5-phosphate. It participates in carbohydrate biosynthesis; Calvin cycle. In terms of biological role, catalyzes the transfer of a two-carbon ketol group from a ketose donor to an aldose acceptor, via a covalent intermediate with the cofactor thiamine pyrophosphate. In Sinorhizobium medicae (strain WSM419) (Ensifer medicae), this protein is Transketolase (cbbT).